The primary structure comprises 598 residues: uncharacterized protein (598 aa).

This is an uncharacterized protein from Homo sapiens (Human).